The primary structure comprises 637 residues: Neurexin-3-beta (637 aa).

The signal sequence occupies residues 1–35 (MHLRIHARRSPPRRPAWTLGIWFLFWGCIVSSVWS). The Extracellular portion of the chain corresponds to 36–562 (SSNVASSSST…EVIRESSSTT (527 aa)). The span at 43-52 (SSTSSSPGSH) shows a compositional bias: low complexity. Residues 43–65 (SSTSSSPGSHSQHEHHFHGSKHH) form a disordered region. The segment covering 55–65 (HEHHFHGSKHH) has biased composition (basic residues). In terms of domain architecture, Laminin G-like spans 85 to 255 (ATYIFGKSGG…NPNIKINGSV (171 aa)). Positions 137 and 154 each coordinate Ca(2+). N184 carries N-linked (GlcNAc...) asparagine glycosylation. Residues I206 and N208 each contribute to the Ca(2+) site. 2 N-linked (GlcNAc...) asparagine glycosylation sites follow: N252 and N296. The disordered stretch occupies residues 289–310 (ATTTTRKNRSTASIQPTSDDLV). Over residues 298 to 310 (STASIQPTSDDLV) the composition is skewed to polar residues. O-linked (Xyl...) (heparan sulfate) serine glycosylation occurs at S312. A helical transmembrane segment spans residues 563 to 583 (GMVVGIVAAAALCILILLYAM). Residues 584-637 (YKYRNRDEGSYQVDETRNYISNSAQSNGTLMKEKQQSSKSGHKKQKNKDREYYV) are Cytoplasmic-facing. Residues 605–637 (NSAQSNGTLMKEKQQSSKSGHKKQKNKDREYYV) form a disordered region.

This sequence belongs to the neurexin family. As to quaternary structure, weakly interacts with CBLN1 and CBLN2. Very weak binding, if any, to CBLN4. Specific isoforms bind neuroligins NLGN1, NLGN2 and NLGN3. Interacts with CLSTN3. In terms of processing, processed by alpha-secretase leading to the formation of an extracellular soluble protein as well as a C-terminal membrane-embedded fragment (CTF). Proteolysis of these CTFs by gamma-secretase releases intracellular domains (ICDs) and extracellular peptides. Post-translationally, O-glycosylated; contains heparan sulfate. Heparan sulfate attachment is required for synapse development by mediating interactions with neuroligins. Expressed in the blood vessel walls (at protein level).

It is found in the presynaptic cell membrane. In terms of biological role, neuronal cell surface protein that may be involved in cell recognition and cell adhesion. May mediate intracellular signaling. Functions as part of a trans-synaptic complex by binding to cerebellins and postsynaptic GRID1. This interaction helps regulate the activity of NMDA and AMPA receptors at hippocampal synapses without affecting synapse formation. NRXN3B-CBLN2-GRID1 complex transduce presynaptic signals into postsynaptic AMPAR response. In Homo sapiens (Human), this protein is Neurexin-3-beta.